The primary structure comprises 138 residues: Acidic phospholipase A2 BmooPLA2 (138 aa).

Residues 1-16 (MRTLWIVAVLLLGVEG) form the signal peptide. 7 cysteine pairs are disulfide-bonded: Cys-42/Cys-131, Cys-44/Cys-60, Cys-59/Cys-111, Cys-65/Cys-138, Cys-66/Cys-104, Cys-73/Cys-97, and Cys-91/Cys-102. Positions 43, 45, and 47 each coordinate Ca(2+). The active site involves His-63. Asp-64 contacts Ca(2+). Asp-105 is an active-site residue.

This sequence belongs to the phospholipase A2 family. Group II subfamily. D49 sub-subfamily. It depends on Ca(2+) as a cofactor. As to expression, expressed by the venom gland.

It is found in the secreted. The enzyme catalyses a 1,2-diacyl-sn-glycero-3-phosphocholine + H2O = a 1-acyl-sn-glycero-3-phosphocholine + a fatty acid + H(+). Its function is as follows. Snake venom phospholipase A2 (PLA2) that inhibits ADP- and collagen-induced platelet aggregation, has edema-inducing, anti-coagulant activity, antibacterial activity, and cytotoxic activity. In vivo, has a hypotensive effect. PLA2 catalyzes the calcium-dependent hydrolysis of the 2-acyl groups in 3-sn-phosphoglycerides. The polypeptide is Acidic phospholipase A2 BmooPLA2 (Bothrops moojeni (Lance-headed viper)).